The following is a 342-amino-acid chain: Glycerol-1-phosphate dehydrogenase [NAD(P)+] (342 aa).

NAD(+)-binding positions include 84–88 and 106–109; these read GRPID and TSAS. Asp-111 lines the substrate pocket. Residue Ser-115 participates in NAD(+) binding. Asp-160 contacts substrate. The Zn(2+) site is built by Asp-160 and His-241. His-245 contributes to the substrate binding site. His-260 lines the Zn(2+) pocket.

Belongs to the glycerol-1-phosphate dehydrogenase family. In terms of assembly, homodimer. Zn(2+) is required as a cofactor.

The protein localises to the cytoplasm. The catalysed reaction is sn-glycerol 1-phosphate + NAD(+) = dihydroxyacetone phosphate + NADH + H(+). It catalyses the reaction sn-glycerol 1-phosphate + NADP(+) = dihydroxyacetone phosphate + NADPH + H(+). It functions in the pathway membrane lipid metabolism; glycerophospholipid metabolism. In terms of biological role, catalyzes the NAD(P)H-dependent reduction of dihydroxyacetonephosphate (DHAP or glycerone phosphate) to glycerol 1-phosphate (G1P). The G1P thus generated is used as the glycerophosphate backbone of phospholipids in the cellular membranes of Archaea. The chain is Glycerol-1-phosphate dehydrogenase [NAD(P)+] from Pyrobaculum islandicum (strain DSM 4184 / JCM 9189 / GEO3).